Here is a 229-residue protein sequence, read N- to C-terminus: MENPLYNDWSLLLEDEFKKDYYLRLRSFLKKEYTEEKIHPAMEDIFNALHFTPFHKVKVVILGQDPYHGPDQAHGLSFSVQPGITIPPSLKNIFKELTHEFGMSMPTHGHLTHWAKQGVLLLNNVLTVREGKAHSHRGQGWEVFTDKVIQTLNQKDHPVVFLLWGGAAQKKGELIDTNKHIILKAPHPSPLSAYRGFFESNHFSKANQILHKNNVEEIDWTLPESPSQG.

The active-site Proton acceptor is Asp-65.

The protein belongs to the uracil-DNA glycosylase (UDG) superfamily. UNG family.

The protein localises to the cytoplasm. The enzyme catalyses Hydrolyzes single-stranded DNA or mismatched double-stranded DNA and polynucleotides, releasing free uracil.. Excises uracil residues from the DNA which can arise as a result of misincorporation of dUMP residues by DNA polymerase or due to deamination of cytosine. The polypeptide is Uracil-DNA glycosylase (Oceanobacillus iheyensis (strain DSM 14371 / CIP 107618 / JCM 11309 / KCTC 3954 / HTE831)).